The chain runs to 290 residues: Probable endonuclease 4 (290 aa).

Zn(2+) is bound by residues His-66, His-106, Glu-143, Asp-179, His-182, His-216, Asp-229, His-231, and Glu-261.

It belongs to the AP endonuclease 2 family. Zn(2+) is required as a cofactor.

The catalysed reaction is Endonucleolytic cleavage to 5'-phosphooligonucleotide end-products.. Endonuclease IV plays a role in DNA repair. It cleaves phosphodiester bonds at apurinic or apyrimidinic (AP) sites, generating a 3'-hydroxyl group and a 5'-terminal sugar phosphate. The polypeptide is Probable endonuclease 4 (Solibacter usitatus (strain Ellin6076)).